The chain runs to 198 residues: Golgi to ER traffic protein 1 (198 aa).

The Lumenal portion of the chain corresponds to Met-1–Ile-6. Residues Leu-7–Ser-26 form a helical membrane-spanning segment. Topologically, residues Gln-27 to Ile-110 are cytoplasmic. Positions Lys-73–Leu-106 form a coiled coil. Residues Ser-111–Phe-131 traverse the membrane as a helical segment. Residues Tyr-132–Ser-155 are Lumenal-facing. Residues Ile-156 to Leu-172 form a helical membrane-spanning segment. The Cytoplasmic segment spans residues Glu-173–Lys-198.

The protein belongs to the WRB/GET1 family. As to quaternary structure, component of the Golgi to ER traffic (GET) complex, which is composed of GET1, GET2 and GET3. Within the complex, GET1 and GET2 form a heterotetramer which is stabilized by phosphatidylinositol binding and which binds to the GET3 homodimer.

It is found in the endoplasmic reticulum membrane. Its subcellular location is the golgi apparatus membrane. Functionally, required for the post-translational delivery of tail-anchored (TA) proteins to the endoplasmic reticulum. Together with GET2, acts as a membrane receptor for soluble GET3, which recognizes and selectively binds the transmembrane domain of TA proteins in the cytosol. The GET complex cooperates with the HDEL receptor ERD2 to mediate the ATP-dependent retrieval of resident ER proteins that contain a C-terminal H-D-E-L retention signal from the Golgi to the ER. This is Golgi to ER traffic protein 1 from Komagataella phaffii (strain GS115 / ATCC 20864) (Yeast).